Here is a 403-residue protein sequence, read N- to C-terminus: Poly(rC)-binding protein 4 (403 aa).

KH domains are found at residues 17 to 67, 101 to 154, and 241 to 293; these read TLTL…TITG, PVTL…TVSG, and TSSQ…TITG.

Widely expressed, with highest levels in testis and lowest in heart.

The protein resides in the cytoplasm. In terms of biological role, single-stranded nucleic acid binding protein that binds preferentially to oligo dC. This Mus musculus (Mouse) protein is Poly(rC)-binding protein 4 (Pcbp4).